The chain runs to 194 residues: RxLR effector protein Avh240 (194 aa).

The first 23 residues, 1 to 23 (MRPYFTLLLALAFILACTNLVEA), serve as a signal peptide directing secretion. A RxLR-dEER motif is present at residues 38–57 (RHLRTAVASVVDLPDDEDER). Residues 58–108 (LLGYNTVQLWRMRRTANKLMNGKLTTQKEAALKKWMASQQDKFLAKWLKSS) are host plasma membrane-binding.

Belongs to the RxLR effector family. In terms of assembly, homodimer. Interacts with host soybean aspartic protease AP1.

The protein resides in the secreted. Its subcellular location is the host cell membrane. Functionally, effector that suppresses plant defense responses during the early stages of pathogen infection. Suppresses cell death induced by effectors and PAMPs in plant hosts. Avh240 dimerizes and localizes at the plasma membrane to interfere with aspartic protease AP1 secretion, which presents an effective mechanism by which effector proteins suppress plant apoplastic immunity. In Phytophthora sojae (Soybean stem and root rot agent), this protein is RxLR effector protein Avh240.